We begin with the raw amino-acid sequence, 152 residues long: UPF0266 membrane protein KPK_1957 (152 aa).

Helical transmembrane passes span 6 to 26, 45 to 65, and 67 to 87; these read LVIILFILALLAYAVYDQFIM, VDGLIFVGLTAILIYNNITQH, and TPITTWLLSALALMGLYLFWI.

The protein belongs to the UPF0266 family.

It is found in the cell inner membrane. The chain is UPF0266 membrane protein KPK_1957 from Klebsiella pneumoniae (strain 342).